The following is a 315-amino-acid chain: Methionyl-tRNA formyltransferase (315 aa).

(6S)-5,6,7,8-tetrahydrofolate is bound at residue 112–115 (SLLP).

It belongs to the Fmt family.

It carries out the reaction L-methionyl-tRNA(fMet) + (6R)-10-formyltetrahydrofolate = N-formyl-L-methionyl-tRNA(fMet) + (6S)-5,6,7,8-tetrahydrofolate + H(+). Attaches a formyl group to the free amino group of methionyl-tRNA(fMet). The formyl group appears to play a dual role in the initiator identity of N-formylmethionyl-tRNA by promoting its recognition by IF2 and preventing the misappropriation of this tRNA by the elongation apparatus. This Leptospira borgpetersenii serovar Hardjo-bovis (strain JB197) protein is Methionyl-tRNA formyltransferase.